A 191-amino-acid polypeptide reads, in one-letter code: 3-isopropylmalate dehydratase small subunit (191 aa).

The protein belongs to the LeuD family. LeuD type 1 subfamily. As to quaternary structure, heterodimer of LeuC and LeuD.

The catalysed reaction is (2R,3S)-3-isopropylmalate = (2S)-2-isopropylmalate. It functions in the pathway amino-acid biosynthesis; L-leucine biosynthesis; L-leucine from 3-methyl-2-oxobutanoate: step 2/4. In terms of biological role, catalyzes the isomerization between 2-isopropylmalate and 3-isopropylmalate, via the formation of 2-isopropylmaleate. In Solibacter usitatus (strain Ellin6076), this protein is 3-isopropylmalate dehydratase small subunit.